Reading from the N-terminus, the 357-residue chain is 3-isopropylmalate dehydrogenase (357 aa).

Position 76–89 (76–89) interacts with NAD(+); sequence GYQWESLDISVRPE. Residues arginine 96, arginine 106, arginine 134, and aspartate 224 each contribute to the substrate site. Residues aspartate 224, aspartate 248, and aspartate 252 each coordinate Mg(2+). Residue 282–294 participates in NAD(+) binding; that stretch reads GSAPDIAGQNIAN.

This sequence belongs to the isocitrate and isopropylmalate dehydrogenases family. LeuB type 1 subfamily. As to quaternary structure, homodimer. Mg(2+) serves as cofactor. It depends on Mn(2+) as a cofactor.

It is found in the cytoplasm. The catalysed reaction is (2R,3S)-3-isopropylmalate + NAD(+) = 4-methyl-2-oxopentanoate + CO2 + NADH. The protein operates within amino-acid biosynthesis; L-leucine biosynthesis; L-leucine from 3-methyl-2-oxobutanoate: step 3/4. In terms of biological role, catalyzes the oxidation of 3-carboxy-2-hydroxy-4-methylpentanoate (3-isopropylmalate) to 3-carboxy-4-methyl-2-oxopentanoate. The product decarboxylates to 4-methyl-2 oxopentanoate. This Hydrogenovibrio crunogenus (strain DSM 25203 / XCL-2) (Thiomicrospira crunogena) protein is 3-isopropylmalate dehydrogenase.